The chain runs to 349 residues: Lipoyl synthase (349 aa).

C55, C60, C66, C81, C85, C88, and S292 together coordinate [4Fe-4S] cluster. Residues 67 to 281 enclose the Radical SAM core domain; the sequence is WEDREATFLI…SDAAYELGIK (215 aa). A disordered region spans residues 321–349; sequence LDSTTSQEASTLLERYGASEDTPVTASRR.

The protein belongs to the radical SAM superfamily. Lipoyl synthase family. It depends on [4Fe-4S] cluster as a cofactor.

It is found in the cytoplasm. It catalyses the reaction [[Fe-S] cluster scaffold protein carrying a second [4Fe-4S](2+) cluster] + N(6)-octanoyl-L-lysyl-[protein] + 2 oxidized [2Fe-2S]-[ferredoxin] + 2 S-adenosyl-L-methionine + 4 H(+) = [[Fe-S] cluster scaffold protein] + N(6)-[(R)-dihydrolipoyl]-L-lysyl-[protein] + 4 Fe(3+) + 2 hydrogen sulfide + 2 5'-deoxyadenosine + 2 L-methionine + 2 reduced [2Fe-2S]-[ferredoxin]. It participates in protein modification; protein lipoylation via endogenous pathway; protein N(6)-(lipoyl)lysine from octanoyl-[acyl-carrier-protein]: step 2/2. Functionally, catalyzes the radical-mediated insertion of two sulfur atoms into the C-6 and C-8 positions of the octanoyl moiety bound to the lipoyl domains of lipoate-dependent enzymes, thereby converting the octanoylated domains into lipoylated derivatives. This chain is Lipoyl synthase, found in Corynebacterium jeikeium (strain K411).